A 306-amino-acid polypeptide reads, in one-letter code: uncharacterized protein (306 aa).

The stretch at 277–306 (TEIIQNYKIANELKKEKQQNKKKNSIELEE) forms a coiled coil.

This is an uncharacterized protein from Saccharolobus islandicus (Sulfolobus islandicus).